The chain runs to 1201 residues: Vitamin B12-dependent ribonucleotide reductase (1201 aa).

Substrate-binding positions include serine 153, 198 to 199 (AC), glycine 230, 482 to 486 (NPCSE), and 683 to 687 (PTGTI). Cysteine 199 and cysteine 495 are disulfide-bonded. The active-site Proton acceptor is asparagine 482. Cysteine 484 functions as the Cysteine radical intermediate in the catalytic mechanism. Glutamate 486 serves as the catalytic Proton acceptor. Over residues 1100-1118 (DEIGSKRATAESNGQEKET) the composition is skewed to basic and acidic residues. Positions 1100-1120 (DEIGSKRATAESNGQEKETLS) are disordered.

It belongs to the ribonucleoside diphosphate reductase class-2 family. Adenosylcob(III)alamin is required as a cofactor.

The enzyme catalyses a 2'-deoxyribonucleoside 5'-diphosphate + [thioredoxin]-disulfide + H2O = a ribonucleoside 5'-diphosphate + [thioredoxin]-dithiol. Functionally, catalyzes the reduction of ribonucleotides to deoxyribonucleotides. May function to provide a pool of deoxyribonucleotide precursors for DNA repair during oxygen limitation and/or for immediate growth after restoration of oxygen. The protein is Vitamin B12-dependent ribonucleotide reductase (nrdJ) of Leptospira interrogans serogroup Icterohaemorrhagiae serovar Lai (strain 56601).